Consider the following 305-residue polypeptide: Putative S-adenosyl-L-methionine-dependent methyltransferase Mvan_1344 (305 aa).

S-adenosyl-L-methionine is bound by residues Asp130 and 159–160 (DL).

The protein belongs to the UPF0677 family.

Exhibits S-adenosyl-L-methionine-dependent methyltransferase activity. This is Putative S-adenosyl-L-methionine-dependent methyltransferase Mvan_1344 from Mycolicibacterium vanbaalenii (strain DSM 7251 / JCM 13017 / BCRC 16820 / KCTC 9966 / NRRL B-24157 / PYR-1) (Mycobacterium vanbaalenii).